The sequence spans 418 residues: Gamma-glutamyl phosphate reductase (418 aa).

It belongs to the gamma-glutamyl phosphate reductase family.

It localises to the cytoplasm. It carries out the reaction L-glutamate 5-semialdehyde + phosphate + NADP(+) = L-glutamyl 5-phosphate + NADPH + H(+). It functions in the pathway amino-acid biosynthesis; L-proline biosynthesis; L-glutamate 5-semialdehyde from L-glutamate: step 2/2. Functionally, catalyzes the NADPH-dependent reduction of L-glutamate 5-phosphate into L-glutamate 5-semialdehyde and phosphate. The product spontaneously undergoes cyclization to form 1-pyrroline-5-carboxylate. The polypeptide is Gamma-glutamyl phosphate reductase (Histophilus somni (strain 2336) (Haemophilus somnus)).